The following is a 408-amino-acid chain: UDP-N-acetylglucosamine--dolichyl-phosphate N-acetylglucosaminephosphotransferase (408 aa).

The next 2 membrane-spanning stretches (helical) occupy residues S6–P26 and W32–I52. Residues D68 and E84 each contribute to the UDP-N-acetyl-alpha-D-glucosamine site. 2 helical membrane-spanning segments follow: residues G87 to F107 and A120 to L140. K145 serves as a coordination point for dolichyl phosphate. A run of 2 helical transmembrane segments spans residues I147–V167 and L181–F201. Dolichyl phosphate is bound at residue I200–I208. N207 provides a ligand contact to Mg(2+). N213 lines the UDP-N-acetyl-alpha-D-glucosamine pocket. 2 consecutive transmembrane segments (helical) span residues V221–V241 and H258–Y278. D289 lines the Mg(2+) pocket. A helical transmembrane segment spans residues M297 to I317. Residue R338–R340 participates in UDP-N-acetyl-alpha-D-glucosamine binding. 2 helical membrane-spanning segments follow: residues M351–L371 and L376–Y396.

Belongs to the glycosyltransferase 4 family. In terms of assembly, homodimer. Mg(2+) is required as a cofactor.

Its subcellular location is the endoplasmic reticulum membrane. It catalyses the reaction a di-trans,poly-cis-dolichyl phosphate + UDP-N-acetyl-alpha-D-glucosamine = an N-acetyl-alpha-D-glucosaminyl-diphospho-di-trans,poly-cis-dolichol + UMP. Its pathway is protein modification; protein glycosylation. Its activity is regulated as follows. Inhibited by natural nucleoside antibiotic tunicamycin, which acts as a structural analog and competitor of UDP-GlcNAc. UDP-N-acetylglucosamine--dolichyl-phosphate N-acetylglucosaminephosphotransferase that operates in the biosynthetic pathway of dolichol-linked oligosaccharides, the glycan precursors employed in protein asparagine (N)-glycosylation. The assembly of dolichol-linked oligosaccharides begins on the cytosolic side of the endoplasmic reticulum membrane and finishes in its lumen. The sequential addition of sugars to dolichol pyrophosphate produces dolichol-linked oligosaccharides containing fourteen sugars, including two GlcNAcs, nine mannoses and three glucoses. Once assembled, the oligosaccharide is transferred from the lipid to nascent proteins by oligosaccharyltransferases. Catalyzes the initial step of dolichol-linked oligosaccharide biosynthesis, transfering GlcNAc-1-P from cytosolic UDP-GlcNAc onto the carrier lipid dolichyl phosphate (P-dolichol), yielding GlcNAc-P-P-dolichol embedded in the cytoplasmic leaflet of the endoplasmic reticulum membrane. This Dictyostelium discoideum (Social amoeba) protein is UDP-N-acetylglucosamine--dolichyl-phosphate N-acetylglucosaminephosphotransferase (alg7).